The following is a 352-amino-acid chain: MSASTTDTLRHDWTLAEVRALFVQPFNDLLFQAQTVHRAHFDANRVQVSTLLSIKTGACPEDCKYCPQSGHYNTGLEKEKLLEVQKVLEEAARAKAIGSTRFCMGAAWKHPSAKDMPYVLEMVKGVKAMGMETCMTLGRLDQEQTEALATAGLDYYNHNLDTSPEFYGSIITTRTYSERLQTLAYVRDAGMKICSGGILGMGESLDDRAGLLIQLANLPEHPESVPINMLVKVAGTPLENAEDVDPFDFIRMLAVARILMPQSHVRLSAGREAMNEQMQALAFFAGANSIFYGDKLLTTANPQADKDMLLFSRLGIKPEAGEGHADEVHQAAIEQALVEQQSSSMFYDAASA.

Residues 44-262 (NRVQVSTLLS…LAVARILMPQ (219 aa)) enclose the Radical SAM core domain. 3 residues coordinate [4Fe-4S] cluster: Cys59, Cys63, and Cys66. Residues Cys103, Cys134, Cys194, and Arg266 each coordinate [2Fe-2S] cluster.

This sequence belongs to the radical SAM superfamily. Biotin synthase family. Homodimer. [4Fe-4S] cluster is required as a cofactor. It depends on [2Fe-2S] cluster as a cofactor.

It catalyses the reaction (4R,5S)-dethiobiotin + (sulfur carrier)-SH + 2 reduced [2Fe-2S]-[ferredoxin] + 2 S-adenosyl-L-methionine = (sulfur carrier)-H + biotin + 2 5'-deoxyadenosine + 2 L-methionine + 2 oxidized [2Fe-2S]-[ferredoxin]. The protein operates within cofactor biosynthesis; biotin biosynthesis; biotin from 7,8-diaminononanoate: step 2/2. Its function is as follows. Catalyzes the conversion of dethiobiotin (DTB) to biotin by the insertion of a sulfur atom into dethiobiotin via a radical-based mechanism. The chain is Biotin synthase from Pseudomonas savastanoi pv. phaseolicola (strain 1448A / Race 6) (Pseudomonas syringae pv. phaseolicola (strain 1448A / Race 6)).